The chain runs to 205 residues: N-(5'-phosphoribosyl)anthranilate isomerase (205 aa).

Belongs to the TrpF family.

The catalysed reaction is N-(5-phospho-beta-D-ribosyl)anthranilate = 1-(2-carboxyphenylamino)-1-deoxy-D-ribulose 5-phosphate. It participates in amino-acid biosynthesis; L-tryptophan biosynthesis; L-tryptophan from chorismate: step 3/5. This Acidiphilium cryptum (strain JF-5) protein is N-(5'-phosphoribosyl)anthranilate isomerase.